A 242-amino-acid chain; its full sequence is Ribonuclease HII (242 aa).

The RNase H type-2 domain occupies 21 to 234 (KIIVGLDEAG…SKNLLKEIEE (214 aa)). Asp-27, Glu-28, and Asp-128 together coordinate a divalent metal cation.

It belongs to the RNase HII family. Requires Mn(2+) as cofactor. Mg(2+) is required as a cofactor.

The protein localises to the cytoplasm. It catalyses the reaction Endonucleolytic cleavage to 5'-phosphomonoester.. Functionally, endonuclease that specifically degrades the RNA of RNA-DNA hybrids. In Methanococcus maripaludis (strain DSM 14266 / JCM 13030 / NBRC 101832 / S2 / LL), this protein is Ribonuclease HII.